A 745-amino-acid polypeptide reads, in one-letter code: Multiple C2 domain and transmembrane region protein 13 (745 aa).

Residues 1-30 (MAANKDEFSVKQISPKLGGERGARNPYGPT) form a disordered region. C2 domains are found at residues 21-139 (RGAR…PQRY), 171-293 (DASE…SAPA), and 326-453 (AEES…ACSY). Ca(2+) contacts are provided by D56, D61, D106, and N110. 2 helical membrane passes run 568 to 588 (SLIV…LVGL) and 688 to 708 (FYCW…PMWL).

The protein belongs to the MCTP family. Requires Ca(2+) as cofactor. As to expression, expressed in incipient leaf primordia.

Its subcellular location is the cell membrane. The protein resides in the cytoplasm. May function as a signaling molecule by regulating the trafficking of other regulators. In Arabidopsis thaliana (Mouse-ear cress), this protein is Multiple C2 domain and transmembrane region protein 13.